The following is a 202-amino-acid chain: Crustacean calcium-binding protein 23 (202 aa).

Position 1 is an N-acetylserine (Ser-1). EF-hand domains are found at residues 33 to 68 (SGLL…FGLD), 69 to 104 (LSDG…EMTE), 105 to 140 (PRKK…KTHP), and 148 to 185 (TEDE…LSKA). Ca(2+)-binding residues include Asp-84, Glu-93, Asp-118, Asp-122, and Asp-129.

Monomer or disulfide-linked dimers. Striated muscle and brain.

Possibly acts as a regulatory protein and not as a calcium buffer or transport protein. The chain is Crustacean calcium-binding protein 23 from Faxonius limosus (Spinycheek crayfish).